Reading from the N-terminus, the 449-residue chain is Nuclear hormone receptor family member nhr-43 (449 aa).

The nuclear receptor DNA-binding region spans 44-122 (NIHCRVCERR…VGLNVDAVVG (79 aa)). 2 consecutive NR C4-type zinc fingers follow at residues 47–68 (CRVCERRYDGSQHFGIDICRAC) and 84–105 (CRRGTNKCELNTVSRKTTCQKC). Positions 125–142 (SPDHVKTTSRDESVKKED) are enriched in basic and acidic residues. Residues 125–154 (SPDHVKTTSRDESVKKEDEESDTGSEGKSC) are disordered. Positions 200 to 449 (NYNEFTKSRL…SDLNAYLYSI (250 aa)) constitute an NR LBD domain.

Its subcellular location is the nucleus. In terms of biological role, ligand-activated transcription factor. Positively modulates expression of homeobox protein lin-39, perhaps by binding to the sequence motif 5'-TGAC-3' in regulatory regions of the lin-39 gene, acting in the embryo, and also in the vulval lineage. The sequence is that of Nuclear hormone receptor family member nhr-43 from Caenorhabditis elegans.